The chain runs to 312 residues: Gamma-soluble NSF attachment protein (312 aa).

The disordered stretch occupies residues 281 to 312; that stretch reads KKKSPATPQAKPDGVTATAADEEEDEYSGGLC. Residue serine 284 is modified to Phosphoserine. At threonine 287 the chain carries Phosphothreonine. A compositionally biased stretch (acidic residues) spans 300–312; sequence ADEEEDEYSGGLC. Serine 308 carries the phosphoserine modification.

This sequence belongs to the SNAP family. In terms of assembly, interacts with RAB11FIP5. Interacts with VTI1A.

Its subcellular location is the membrane. The protein localises to the golgi apparatus. Required for vesicular transport between the endoplasmic reticulum and the Golgi apparatus. The sequence is that of Gamma-soluble NSF attachment protein from Homo sapiens (Human).